The following is a 185-amino-acid chain: Transcription termination/antitermination protein NusG (185 aa).

The region spanning 134–162 is the KOW domain; it reads PGQMVRVIDGPFNDFDGLVEEVNYEKNRL.

It belongs to the NusG family.

Functionally, participates in transcription elongation, termination and antitermination. The chain is Transcription termination/antitermination protein NusG from Xylella fastidiosa (strain Temecula1 / ATCC 700964).